The primary structure comprises 919 residues: Protein phosphatase 1 regulatory subunit 37 (919 aa).

6 LRR repeats span residues 340–361 (SLQY…FVAR), 368–388 (SLTV…MLLA), 396–417 (NLRE…AQLG), 425–445 (NIQI…AYVC), 454–474 (GLVT…GYLA), and 482–502 (SLET…HKLK). Disordered regions lie at residues 626 to 716 (ATED…TIPS) and 790 to 866 (APSQ…APLP). Acidic residues predominate over residues 631–640 (THEEEEEEEA). Over residues 641 to 658 (SPLKKIEEETTDALKDAT) the composition is skewed to basic and acidic residues. The segment covering 677–690 (PQDDSDSDTEDEET) has biased composition (acidic residues). A compositionally biased stretch (low complexity) spans 691–701 (PTNTSLTSTSP). Polar residues-rich tracts occupy residues 791–801 (PSQTQNSTQPT) and 811–837 (DAQQ…LTES). Residues 833 to 861 (QLTESVSEEEQKKAETLNNEADINEDANT) adopt a coiled-coil conformation.

Belongs to the PPP1R37 family.

May inhibit phosphatase activity of protein phosphatase 1 (PP1) complexes. The protein is Protein phosphatase 1 regulatory subunit 37 (ppp1r37) of Danio rerio (Zebrafish).